The primary structure comprises 126 residues: Holo-[acyl-carrier-protein] synthase (126 aa).

Mg(2+)-binding residues include D9 and E57.

Belongs to the P-Pant transferase superfamily. AcpS family. The cofactor is Mg(2+).

The protein localises to the cytoplasm. It carries out the reaction apo-[ACP] + CoA = holo-[ACP] + adenosine 3',5'-bisphosphate + H(+). Its function is as follows. Transfers the 4'-phosphopantetheine moiety from coenzyme A to a Ser of acyl-carrier-protein. This Idiomarina loihiensis (strain ATCC BAA-735 / DSM 15497 / L2-TR) protein is Holo-[acyl-carrier-protein] synthase.